The sequence spans 674 residues: Probable copper-transporting P-type ATPase B (674 aa).

The tract at residues 1-20 is disordered; sequence MNHSNHMHHDNHESHHHYSG. A run of 6 helical transmembrane segments spans residues 32–52, 57–77, 95–115, 127–147, 284–304, and 315–335; these read FFVSLIFAIPIILLSPMMGVN, FTFPGSEWVVLILSTILFFYG, GMMTLVALGISVAYIYSLYAF, TMDFFWELATLILIMLLGHWI, GYLFYFAVIVGVISFIVWMLI, and LVTVLVIACPHALGLAIPLVT. The active-site 4-aspartylphosphate intermediate is D367. Positions 565 and 569 each coordinate Mg(2+). Transmembrane regions (helical) follow at residues 623–645 and 649–671; these read LWWGAGYNIVAVPLAAGALAFIG and SPAVGAILMSLSTVIVAINAFTL.

It belongs to the cation transport ATPase (P-type) (TC 3.A.3) family. Type IB subfamily.

The protein localises to the cell membrane. It catalyses the reaction Cu(+)(in) + ATP + H2O = Cu(+)(out) + ADP + phosphate + H(+). Involved in copper transport. The protein is Probable copper-transporting P-type ATPase B (copB) of Staphylococcus haemolyticus (strain JCSC1435).